The primary structure comprises 309 residues: MRLPRITKFALYRENPCLLPLYHATRDPSLAKREWTWICKELKLLYPEISKHGLRKKIVNACQLRARNYPLQYILKSQPFGNIKIDCQQGVLIPRWETEEWVERVVDKLNRLERLKPLKILDLCTGSGCISSFVLANLRVPHTIEAVDVSKKALKLAVKNCDRAIAHGTVGKINFHQIDVLNEHERVESLLQTSHVLLCNPPYISDDDFAAQTDISVRKYEPKLALLAKNGGNEFYYKFSQYIKRMLQRNAKDFVPLSLIVFEIGSTHQAKIVKSLFDDTNWQANIEQDGAHQDRVVIITRKDRRLIDI.

Residues C124–G128, D148, and N200 contribute to the S-adenosyl-L-methionine site. Residue N200–Y203 coordinates substrate.

Belongs to the protein N5-glutamine methyltransferase family.

It localises to the mitochondrion. It carries out the reaction L-glutaminyl-[peptide chain release factor] + S-adenosyl-L-methionine = N(5)-methyl-L-glutaminyl-[peptide chain release factor] + S-adenosyl-L-homocysteine + H(+). Methylates MRF1 on 'Gln-270' using S-adenosyl L-methionine as methyl donor. The sequence is that of Probable MRF1 mitochondrial N(5)-glutamine methyltransferase mtq1 (mtq1) from Schizosaccharomyces pombe (strain 972 / ATCC 24843) (Fission yeast).